A 369-amino-acid chain; its full sequence is tRNA/tmRNA (uracil-C(5))-methyltransferase (369 aa).

S-adenosyl-L-methionine-binding residues include Q193, Y221, N226, E242, and D302. The Nucleophile role is filled by C327. E361 serves as the catalytic Proton acceptor.

Belongs to the class I-like SAM-binding methyltransferase superfamily. RNA M5U methyltransferase family. TrmA subfamily.

It catalyses the reaction uridine(54) in tRNA + S-adenosyl-L-methionine = 5-methyluridine(54) in tRNA + S-adenosyl-L-homocysteine + H(+). It carries out the reaction uridine(341) in tmRNA + S-adenosyl-L-methionine = 5-methyluridine(341) in tmRNA + S-adenosyl-L-homocysteine + H(+). Its function is as follows. Dual-specificity methyltransferase that catalyzes the formation of 5-methyluridine at position 54 (m5U54) in all tRNAs, and that of position 341 (m5U341) in tmRNA (transfer-mRNA). The polypeptide is tRNA/tmRNA (uracil-C(5))-methyltransferase (Sulfurimonas denitrificans (strain ATCC 33889 / DSM 1251) (Thiomicrospira denitrificans (strain ATCC 33889 / DSM 1251))).